The following is a 110-amino-acid chain: Large ribosomal subunit protein P1B (110 aa).

A compositionally biased stretch (low complexity) spans 69–85 (PAAGGAGAPAAAAGGEA). The segment at 69-110 (PAAGGAGAPAAAAGGEAAAEEQKEEAKEEEESDEDMGFGLFD) is disordered. Residues 95-104 (KEEEESDEDM) are compositionally biased toward acidic residues.

This sequence belongs to the eukaryotic ribosomal protein P1/P2 family. In terms of assembly, component of the large ribosomal subunit (LSU). Mature yeast ribosomes consist of a small (40S) and a large (60S) subunit. The 40S small subunit contains 1 molecule of ribosomal RNA (18S rRNA) and at least 33 different proteins. The large 60S subunit contains 3 rRNA molecules (25S, 5.8S and 5S rRNA) and at least 46 different proteins. The acidic ribosomal P-proteins form the stalk structure of the 60S subunit. They are organized as a pentameric complex in which uL10/P0 interacts with 2 heterodimers of P1 and P2 proteins.

The protein resides in the cytoplasm. Its function is as follows. Component of the ribosome, a large ribonucleoprotein complex responsible for the synthesis of proteins in the cell. The small ribosomal subunit (SSU) binds messenger RNAs (mRNAs) and translates the encoded message by selecting cognate aminoacyl-transfer RNA (tRNA) molecules. The large subunit (LSU) contains the ribosomal catalytic site termed the peptidyl transferase center (PTC), which catalyzes the formation of peptide bonds, thereby polymerizing the amino acids delivered by tRNAs into a polypeptide chain. The nascent polypeptides leave the ribosome through a tunnel in the LSU and interact with protein factors that function in enzymatic processing, targeting, and the membrane insertion of nascent chains at the exit of the ribosomal tunnel. The polypeptide is Large ribosomal subunit protein P1B (rpp102) (Schizosaccharomyces pombe (strain 972 / ATCC 24843) (Fission yeast)).